The chain runs to 92 residues: UPF0235 protein CCA_00247 (92 aa).

Belongs to the UPF0235 family.

The polypeptide is UPF0235 protein CCA_00247 (Chlamydia caviae (strain ATCC VR-813 / DSM 19441 / 03DC25 / GPIC) (Chlamydophila caviae)).